The chain runs to 110 residues: MKEVKAVHKYAKTSAFKARLVADQIRLKSVEEALNILSFSNKKAAVLVKKVLNSVISNAEHNDGLDIDELFVTSIYIDEGSTMKRIRPRAKGRANRILKRTSHITVGIGK.

The protein belongs to the universal ribosomal protein uL22 family. In terms of assembly, part of the 50S ribosomal subunit.

Its function is as follows. This protein binds specifically to 23S rRNA; its binding is stimulated by other ribosomal proteins, e.g. L4, L17, and L20. It is important during the early stages of 50S assembly. It makes multiple contacts with different domains of the 23S rRNA in the assembled 50S subunit and ribosome. Functionally, the globular domain of the protein is located near the polypeptide exit tunnel on the outside of the subunit, while an extended beta-hairpin is found that lines the wall of the exit tunnel in the center of the 70S ribosome. The polypeptide is Large ribosomal subunit protein uL22 (Vesicomyosocius okutanii subsp. Calyptogena okutanii (strain HA)).